The primary structure comprises 265 residues: Triosephosphate isomerase (265 aa).

Asparagine 8–lysine 10 lines the substrate pocket. The Electrophile role is filled by histidine 103. Glutamate 182 functions as the Proton acceptor in the catalytic mechanism. Substrate contacts are provided by residues glycine 188, serine 226, and glycine 247–glycine 248.

This sequence belongs to the triosephosphate isomerase family. In terms of assembly, homodimer.

The protein localises to the cytoplasm. It carries out the reaction D-glyceraldehyde 3-phosphate = dihydroxyacetone phosphate. Its pathway is carbohydrate biosynthesis; gluconeogenesis. The protein operates within carbohydrate degradation; glycolysis; D-glyceraldehyde 3-phosphate from glycerone phosphate: step 1/1. Functionally, involved in the gluconeogenesis. Catalyzes stereospecifically the conversion of dihydroxyacetone phosphate (DHAP) to D-glyceraldehyde-3-phosphate (G3P). This chain is Triosephosphate isomerase, found in Psychrobacter sp. (strain PRwf-1).